The following is a 331-amino-acid chain: Probable tRNA pseudouridine synthase B (331 aa).

Asp66 acts as the Nucleophile in catalysis. The PUA domain occupies Ile233–Lys307.

It belongs to the pseudouridine synthase TruB family. Type 2 subfamily.

The catalysed reaction is uridine(55) in tRNA = pseudouridine(55) in tRNA. In terms of biological role, could be responsible for synthesis of pseudouridine from uracil-55 in the psi GC loop of transfer RNAs. The polypeptide is Probable tRNA pseudouridine synthase B (Methanococcus aeolicus (strain ATCC BAA-1280 / DSM 17508 / OCM 812 / Nankai-3)).